The following is a 490-amino-acid chain: Muscarinic acetylcholine receptor M4 (490 aa).

At 1–42 the chain is on the extracellular side; it reads MHNLSAQPWQAKMANLTYDNVTLSNRSEVAIQPPTNYKTVEL. N-linked (GlcNAc...) asparagine glycans are attached at residues asparagine 3, asparagine 15, asparagine 20, and asparagine 25. A helical membrane pass occupies residues 43–64; sequence VFIATVTGSLSLVTVVGNILVM. The Cytoplasmic segment spans residues 65-78; it reads LSIKVNRQLQTVNN. Residues 79 to 99 traverse the membrane as a helical segment; the sequence is YFLFSLACADLIIGVFSMNLY. The Extracellular portion of the chain corresponds to 100 to 116; that stretch reads TVYIIKGYWPLGAVVCD. Cysteines 115 and 195 form a disulfide. The chain crosses the membrane as a helical span at residues 117 to 138; it reads LWLALDYVVSNASVMNLLIISF. Residues 139 to 158 are Cytoplasmic-facing; that stretch reads DRYFCVTKPLTYPARRTTKM. A helical membrane pass occupies residues 159–181; that stretch reads AGLMIAAAWILSFILWAPAILFW. The Extracellular segment spans residues 182-203; sequence QFIVGKRTVHERECYIQFLSNP. The helical transmembrane segment at 204–226 threads the bilayer; that stretch reads AVTFGTAIAAFYLPVVIMTVLYI. Topologically, residues 227 to 412 are cytoplasmic; sequence HISLASRSRV…AAREKKVTRT (186 aa). Positions 236 to 250 are enriched in basic residues; that stretch reads VRRHKPESRKERKGK. The disordered stretch occupies residues 236–343; sequence VRRHKPESRK…HPRVNPTSKW (108 aa). Residues 270-285 are compositionally biased toward basic and acidic residues; it reads RAVEVKEEVRNGKVDD. Polar residues-rich tracts occupy residues 287–296 and 304–314; these read PSAQTEATGQ and NESSTVSMTQT. A helical membrane pass occupies residues 413–433; it reads IFAILLAFILTWTPYNVMVLI. Over 434–447 the chain is Extracellular; sequence NTFCETCVPETVWS. Residues 448–467 form a helical membrane-spanning segment; that stretch reads IGYWLCYVNSTINPACYALC. Topologically, residues 468 to 490 are cytoplasmic; sequence NATFKKTFKHLLMCQYRNIGTAR.

This sequence belongs to the G-protein coupled receptor 1 family. Muscarinic acetylcholine receptor subfamily. CHRM4 sub-subfamily. As to expression, expressed in heart and brain.

Its subcellular location is the cell membrane. The protein localises to the postsynaptic cell membrane. Its function is as follows. The muscarinic acetylcholine receptor mediates various cellular responses, including inhibition of adenylate cyclase, breakdown of phosphoinositides and modulation of potassium channels through the action of G proteins. Primary transducing effect is inhibition of adenylate cyclase. May couple to multiple functional responses in cell lines. This Gallus gallus (Chicken) protein is Muscarinic acetylcholine receptor M4 (CHRM4).